We begin with the raw amino-acid sequence, 232 residues long: Large ribosomal subunit protein uL1 (232 aa).

It belongs to the universal ribosomal protein uL1 family. As to quaternary structure, part of the 50S ribosomal subunit.

Binds directly to 23S rRNA. The L1 stalk is quite mobile in the ribosome, and is involved in E site tRNA release. In terms of biological role, protein L1 is also a translational repressor protein, it controls the translation of the L11 operon by binding to its mRNA. The protein is Large ribosomal subunit protein uL1 of Francisella tularensis subsp. holarctica (strain LVS).